The sequence spans 497 residues: tRNA (adenine(58)-N(1))-methyltransferase non-catalytic subunit TRM6 (497 aa).

Disordered stretches follow at residues 1 to 20 (MEGS…DHRI) and 69 to 100 (TSGG…IVDD). Basic and acidic residues predominate over residues 79–100 (KREEPTAETKEAGTDNRNIVDD). 94 to 104 (NRNIVDDGKSQ) contributes to the substrate binding site. A Phosphothreonine modification is found at T107. Residues 145-154 (KYIKKKKKKY) and 175-182 (REPGKINH) each bind substrate. The tract at residues 276-354 (SSEPKDSALV…EKQRRQEEQR (79 aa)) is disordered. S298 and S305 each carry phosphoserine. The span at 327–354 (DPEHKGPKERGSKKDYIQEKQRRQEEQR) shows a compositional bias: basic and acidic residues. Substrate contacts are provided by residues R349, R377, 415-423 (RERGGVINL), and 434-441 (QVLPDRSH). Residues 472 to 497 (SNASTLESHETEEPAAKKRKCPESDS) are disordered. Over residues 478 to 497 (ESHETEEPAAKKRKCPESDS) the composition is skewed to basic and acidic residues.

Belongs to the TRM6/GCD10 family. As to quaternary structure, heterotetramer; composed of two copies of TRMT6 and two copies of TRMT61A. In terms of tissue distribution, expressed in brain, liver, testis and ovary.

Its subcellular location is the nucleus. Substrate-binding subunit of tRNA (adenine-N(1)-)-methyltransferase, which catalyzes the formation of N(1)-methyladenine at position 58 (m1A58) in initiator methionyl-tRNA. Together with the TRMT61A catalytic subunit, part of a mRNA N(1)-methyltransferase complex that mediates methylation of adenosine residues at the N(1) position of a small subset of mRNAs: N(1) methylation takes place in tRNA T-loop-like structures of mRNAs and is only present at low stoichiometries. The polypeptide is tRNA (adenine(58)-N(1))-methyltransferase non-catalytic subunit TRM6 (TRMT6) (Homo sapiens (Human)).